Consider the following 433-residue polypeptide: Histidinol dehydrogenase 2 (433 aa).

Residues Y130, Q192, and N215 each contribute to the NAD(+) site. The substrate site is built by S238, Q260, and H263. 2 residues coordinate Zn(2+): Q260 and H263. Catalysis depends on proton acceptor residues E328 and H329. The substrate site is built by H329, D362, E416, and H421. D362 is a Zn(2+) binding site. H421 is a Zn(2+) binding site.

Belongs to the histidinol dehydrogenase family. Requires Zn(2+) as cofactor.

It carries out the reaction L-histidinol + 2 NAD(+) + H2O = L-histidine + 2 NADH + 3 H(+). It participates in amino-acid biosynthesis; L-histidine biosynthesis; L-histidine from 5-phospho-alpha-D-ribose 1-diphosphate: step 9/9. Catalyzes the sequential NAD-dependent oxidations of L-histidinol to L-histidinaldehyde and then to L-histidine. The sequence is that of Histidinol dehydrogenase 2 (hisD2) from Nostoc sp. (strain PCC 7120 / SAG 25.82 / UTEX 2576).